Here is a 426-residue protein sequence, read N- to C-terminus: 3-phosphoshikimate 1-carboxyvinyltransferase (426 aa).

3-phosphoshikimate is bound by residues Lys-22, Ser-23, and Arg-27. Lys-22 contributes to the phosphoenolpyruvate binding site. Residues Gly-96 and Arg-124 each contribute to the phosphoenolpyruvate site. Residues Ser-170, Ser-171, Gln-172, Ser-198, Asp-314, Asn-337, and Lys-341 each contribute to the 3-phosphoshikimate site. Phosphoenolpyruvate is bound at residue Gln-172. Asp-314 (proton acceptor) is an active-site residue. Phosphoenolpyruvate contacts are provided by Arg-345, Arg-387, and Lys-412.

The protein belongs to the EPSP synthase family. Monomer.

The protein resides in the cytoplasm. It carries out the reaction 3-phosphoshikimate + phosphoenolpyruvate = 5-O-(1-carboxyvinyl)-3-phosphoshikimate + phosphate. Its pathway is metabolic intermediate biosynthesis; chorismate biosynthesis; chorismate from D-erythrose 4-phosphate and phosphoenolpyruvate: step 6/7. Its function is as follows. Catalyzes the transfer of the enolpyruvyl moiety of phosphoenolpyruvate (PEP) to the 5-hydroxyl of shikimate-3-phosphate (S3P) to produce enolpyruvyl shikimate-3-phosphate and inorganic phosphate. In Vibrio campbellii (strain ATCC BAA-1116), this protein is 3-phosphoshikimate 1-carboxyvinyltransferase.